Consider the following 212-residue polypeptide: Uridine kinase (212 aa).

13–20 lines the ATP pocket; sequence GASASGKS.

This sequence belongs to the uridine kinase family.

It localises to the cytoplasm. It catalyses the reaction uridine + ATP = UMP + ADP + H(+). The catalysed reaction is cytidine + ATP = CMP + ADP + H(+). Its pathway is pyrimidine metabolism; CTP biosynthesis via salvage pathway; CTP from cytidine: step 1/3. It functions in the pathway pyrimidine metabolism; UMP biosynthesis via salvage pathway; UMP from uridine: step 1/1. The polypeptide is Uridine kinase (Psychromonas ingrahamii (strain DSM 17664 / CCUG 51855 / 37)).